The primary structure comprises 503 residues: Cobyric acid synthase (503 aa).

Positions D245–L447 constitute a GATase cobBQ-type domain. C326 functions as the Nucleophile in the catalytic mechanism. Residue H439 is part of the active site.

The protein belongs to the CobB/CobQ family. CobQ subfamily.

It participates in cofactor biosynthesis; adenosylcobalamin biosynthesis. In terms of biological role, catalyzes amidations at positions B, D, E, and G on adenosylcobyrinic A,C-diamide. NH(2) groups are provided by glutamine, and one molecule of ATP is hydrogenolyzed for each amidation. This chain is Cobyric acid synthase, found in Alkaliphilus metalliredigens (strain QYMF).